A 268-amino-acid chain; its full sequence is Phosphate import ATP-binding protein PstB 2 (268 aa).

The region spanning 19–263 (YKVRNMAFFY…PKDKRTEDYI (245 aa)) is the ABC transporter domain. Position 51-58 (51-58 (GPSGCGKS)) interacts with ATP.

The protein belongs to the ABC transporter superfamily. Phosphate importer (TC 3.A.1.7) family. As to quaternary structure, the complex is composed of two ATP-binding proteins (PstB), two transmembrane proteins (PstC and PstA) and a solute-binding protein (PstS).

It localises to the cell inner membrane. The catalysed reaction is phosphate(out) + ATP + H2O = ADP + 2 phosphate(in) + H(+). Its function is as follows. Part of the ABC transporter complex PstSACB involved in phosphate import. Responsible for energy coupling to the transport system. This Gloeobacter violaceus (strain ATCC 29082 / PCC 7421) protein is Phosphate import ATP-binding protein PstB 2.